The sequence spans 635 residues: MIRKCLVLFLSFALLLSVFPMLNVDAANRPLAKIPGNSNPLMDHKLGADPYSLVYDGRVYIFMSSDTYVYNKDGSIKENDFSALDRIQVISSTDMVNWTDHGTIPVAGANNKNSGRGIAKWASNSWAPAVAHKKINGRDKFFLYFANGGAGIGVLTADTPIGPWTDPLGKALVTHSTPGMAGVTWLFDPAVLVDDDGTGYLYSGGGIPNESDPASIANPKTARVIKLGADMTSVIGSATTIDAPYLFEDSGIHKYNGKYYYSYCINFAGTHPQQYPAGEIGYMVSDNPMGPFTYKGHFLKNPYTFFGVGGNNHHAVFNFKNEWYVVYHAQTVSKAQIGAGKGYRSPHINKLVHKEDGSISEVQGNMTGIAQLSNMNPYTRVEAETIAWQAGVTTEPTQASGGPISNLNVTNIHNGDWIAVGKADFGSAGAKTFKANVATNVGGNIEVRLDSETGPLVGSLKVPSTGGMQTWREVETTINNATGVHNIYLVFTGSGSGNLLNLDAWQFTPNTGGNTITKVEAENMKIGGTYAGKISAPFDGVALYANADYVSYSQYFANSTHNISVRGASSNAGTAKVDLVIGGVTVGSFNFTGKTPTVQTLSNITHATGDQEIKLALTSDDGTWDAYVDFIEFSL.

An N-terminal signal peptide occupies residues 1-26 (MIRKCLVLFLSFALLLSVFPMLNVDA). D49 acts as the Proton acceptor in catalysis. E248 functions as the Proton donor in the catalytic mechanism. Residue N311 participates in substrate binding. CBM6 domains lie at 379 to 508 (TRVE…WQFT) and 517 to 634 (TKVE…IEFS). 13 residues coordinate Ca(2+): E382, E384, N406, L407, D503, E520, E522, D539, Y544, D620, W624, D625, and D629.

The protein belongs to the glycosyl hydrolase 43 family.

It is found in the secreted. It catalyses the reaction Hydrolysis of terminal non-reducing alpha-L-arabinofuranoside residues in alpha-L-arabinosides.. It functions in the pathway glycan degradation; xylan degradation. Its activity is regulated as follows. Activated by calcium and magnesium. Inhibited by copper. Cleaves arabinose units from O-2- or O-3-monosubstituted xylose residues, thereby assisting in arabinoxylan (AX) and short-chain arabinoxylo-oligosaccharide (AXOS) degradation. Preferres wheat flour xylan over oat spelt xylan as substrate. Does not display endoxylanase activity. This chain is Arabinoxylan arabinofuranohydrolase (xynD), found in Paenibacillus polymyxa (Bacillus polymyxa).